A 908-amino-acid polypeptide reads, in one-letter code: MTDMNIENRKLNRPASENDKQHKKVFPIEAEAFHSPEETLARLNSHRQGLTIEEASERLKVYGRNEVAHEQVPPALIQLLQAFNNPFIYVLMALAGVSFITDYWLPLRRGEETDLTGVLIILTMVSLSGLLRFWQEFRTNRAAQALKKMVRTTATVLRRGPGNIGAVQEEIPIEELVPGDVVFLAAGDLVPADVRLLASRDLFISQSILSGESLPVEKYDVMADVAGKDSEQLPDKDKSLLDLGNICLMGTNVTSGRAQAVVVATGSRTWFGSLAKSIVGTRTQTAFDRGVNSVSWLLIRFMLIMVPVVLLINGFSKGDWVEASLFALAVAVGLTPEMLPMIVSSNLAKGAIAMSRRKVIVKRLNAIQNFGAMDVLCTDKTGTLTQDNIFLEHHLDVSGVKSSRVLMLAWLNSSSQSGARNVMDRAILRFGEGRIAPSTKARFIKRDELPFDFVRRRVSVLVEDAQHGDRCLICKGAVEEMMMVATHLREGDRVVALTETRRELLLAKTEDYNAQGFRVLLIATRKLDGSGNNPTLSVEDETELTIEGMLTFLDPPKESAGKAIAALRDNGVAVKVLTGDNPVVTARICLEVGIDTHDILTGTQVEAMSDAELASEVEKRAVFARLTPLQKTRILQALQKNGHTVGFLGDGINDAPALRDADVGISVDSAADIAKESSDIILLEKDLMVLEEGVIKGRETFGNIIKYLNMTASSNFGNVFSVLVASAFIPFLPMLAIHLLIQNLMYDISQLSLPWDKMDKEFLRKPRKWDAKNIGRFMLWIGPTSSIFDITTFALMWYVFAANNVEAQALFQSGWFIEGLLSQTLVVHMLRTQKIPFIQSRATLPVLLTTGLIMAIGIYIPFSPLGAMVGLEPLPLSYFPWLVATLLSYCLVAQGMKRFYIKRFGQWF.

The segment covering 1–20 has biased composition (basic and acidic residues); that stretch reads MTDMNIENRKLNRPASENDK. The disordered stretch occupies residues 1 to 21; sequence MTDMNIENRKLNRPASENDKQ. Residues 1–80 are Cytoplasmic-facing; the sequence is MTDMNIENRK…QVPPALIQLL (80 aa). The helical transmembrane segment at 81 to 101 threads the bilayer; the sequence is QAFNNPFIYVLMALAGVSFIT. Residues 102 to 113 are Extracellular-facing; the sequence is DYWLPLRRGEET. A helical transmembrane segment spans residues 114–134; that stretch reads DLTGVLIILTMVSLSGLLRFW. The Cytoplasmic segment spans residues 135–293; it reads QEFRTNRAAQ…QTAFDRGVNS (159 aa). Residues 294-314 traverse the membrane as a helical segment; the sequence is VSWLLIRFMLIMVPVVLLING. The Extracellular portion of the chain corresponds to 315-323; the sequence is FSKGDWVEA. A helical transmembrane segment spans residues 324 to 341; sequence SLFALAVAVGLTPEMLPM. A Mg(2+)-binding site is contributed by glutamate 337. At 342-704 the chain is on the cytoplasmic side; the sequence is IVSSNLAKGA…IKGRETFGNI (363 aa). The active-site 4-aspartylphosphate intermediate is the aspartate 379. The Mg(2+) site is built by aspartate 650, aspartate 654, and asparagine 718. Residues 705–724 form a helical membrane-spanning segment; the sequence is IKYLNMTASSNFGNVFSVLV. Topologically, residues 725–733 are extracellular; the sequence is ASAFIPFLP. Residues 734–753 form a helical membrane-spanning segment; the sequence is MLAIHLLIQNLMYDISQLSL. Mg(2+)-binding residues include asparagine 743 and aspartate 747. Over 754–775 the chain is Cytoplasmic; sequence PWDKMDKEFLRKPRKWDAKNIG. The chain crosses the membrane as a helical span at residues 776-799; sequence RFMLWIGPTSSIFDITTFALMWYV. Over 800-808 the chain is Extracellular; sequence FAANNVEAQ. Residues 809–827 traverse the membrane as a helical segment; the sequence is ALFQSGWFIEGLLSQTLVV. Residues 828–840 are Cytoplasmic-facing; that stretch reads HMLRTQKIPFIQS. Residues 841–860 traverse the membrane as a helical segment; it reads RATLPVLLTTGLIMAIGIYI. The Extracellular segment spans residues 861–875; sequence PFSPLGAMVGLEPLP. A helical membrane pass occupies residues 876–895; the sequence is LSYFPWLVATLLSYCLVAQG. Topologically, residues 896–908 are cytoplasmic; sequence MKRFYIKRFGQWF.

The protein belongs to the cation transport ATPase (P-type) (TC 3.A.3) family. Type IIIB subfamily.

The protein localises to the cell inner membrane. It carries out the reaction Mg(2+)(out) + ATP + H2O = Mg(2+)(in) + ADP + phosphate + H(+). In terms of biological role, mediates magnesium influx to the cytosol. In Salmonella typhimurium (strain LT2 / SGSC1412 / ATCC 700720), this protein is Magnesium-transporting ATPase, P-type 1 (mgtB).